The chain runs to 641 residues: FACT complex subunit SSRP1-A (641 aa).

Positions 459–561 (TDDDAVDPHL…DPNAPKRAMT (103 aa)) are disordered. A compositionally biased stretch (acidic residues) spans 476–487 (GDEESDEEDEDF). Positions 512 to 524 (GGEKEKLSKKEAS) are enriched in basic and acidic residues. The segment at residues 556–624 (PKRAMTPFMY…RYEKESAVYR (69 aa)) is a DNA-binding region (HMG box).

It belongs to the SSRP1 family. In terms of assembly, component of the FACT complex, a stable heterodimer of SPT16 and SSRP1.

The protein localises to the nucleus. Its subcellular location is the chromosome. Its function is as follows. Component of the FACT complex, a general chromatin factor that acts to reorganize nucleosomes. The FACT complex is involved in multiple processes that require DNA as a template such as mRNA elongation, DNA replication and DNA repair. During transcription elongation the FACT complex acts as a histone chaperone that both destabilizes and restores nucleosomal structure. It facilitates the passage of RNA polymerase II and transcription by promoting the dissociation of one histone H2A-H2B dimer from the nucleosome, then subsequently promotes the reestablishment of the nucleosome following the passage of RNA polymerase II. Binds specifically to double-stranded DNA. In Oryza sativa subsp. japonica (Rice), this protein is FACT complex subunit SSRP1-A (SSRP1-A).